A 572-amino-acid polypeptide reads, in one-letter code: MTNKEIIKRLYHEIIPYKIPLFIAMFAMIVVAALTGAQAYLVKDLLDKIFMEKDVFFLQILPLIIIAIFFTKGVLYYTYAIILERVGQSIIRDFRLKIFAHIHRQSLSFFHNTPTGTLISRVLSDVALMQQAVSTVIIQLLRDFFQVIFLLGVIFYMNWKLALICFLIIPLAAIPIVKFGKIFRKLSTKTQEETAEVSNMLHETISGSRIVKAFCREDYEVERFHRQVETLFTITMKNAKYRVFQSPLMEIIGGFAVAGIIWVGGSEVINGSATPGTFFAFLTAMITAYDPVKRVSQVNSTIQQGLASAQRVFAILDIKPEIEDKPEATSLAPFKESIEFHDVSFSYGTEKILSHINLKVPAGEALAIVGPSGGGKTTLTNLIPRFIDLQEGSITIDGTDIRDVTTNSLRNQIAMVTQQTILFNDTIRNNIAYGKDSCTEEEIRRAAKAAHALTFIEELPNGFDTALGEGGAKLSGGQRQRISIARALLADAPILILDEATSALDTESEREVQKALENLMQNRTTFVIAHRLSTIKNASRIVVVKKGKIVEEGSHEELLKLEGEYQLLYNMQ.

5 helical membrane passes run Ile14–Leu34, Val55–Leu75, Ile148–Ile168, Met249–Ile269, and Ser272–Val292. The ABC transmembrane type-1 domain occupies Phe22–Gln304. The 234-residue stretch at Ile338–Met571 folds into the ABC transporter domain. Gly370–Thr377 contributes to the ATP binding site.

The protein belongs to the ABC transporter superfamily. Lipid exporter (TC 3.A.1.106) family. As to quaternary structure, homodimer.

The protein resides in the cell inner membrane. The catalysed reaction is ATP + H2O + lipid A-core oligosaccharideSide 1 = ADP + phosphate + lipid A-core oligosaccharideSide 2.. In terms of biological role, involved in lipopolysaccharide (LPS) biosynthesis. Translocates lipid A-core from the inner to the outer leaflet of the inner membrane. Transmembrane domains (TMD) form a pore in the inner membrane and the ATP-binding domain (NBD) is responsible for energy generation. The polypeptide is ATP-dependent lipid A-core flippase (Desulfotalea psychrophila (strain LSv54 / DSM 12343)).